A 247-amino-acid chain; its full sequence is 5-oxoprolinase subunit A (247 aa).

The protein belongs to the LamB/PxpA family. As to quaternary structure, forms a complex composed of PxpA, PxpB and PxpC.

The catalysed reaction is 5-oxo-L-proline + ATP + 2 H2O = L-glutamate + ADP + phosphate + H(+). Catalyzes the cleavage of 5-oxoproline to form L-glutamate coupled to the hydrolysis of ATP to ADP and inorganic phosphate. This is 5-oxoprolinase subunit A from Vibrio vulnificus (strain CMCP6).